We begin with the raw amino-acid sequence, 144 residues long: Large ribosomal subunit protein uL15 (144 aa).

Residues 1 to 53 (MRLNTLSPAEGSKHASKRPGRGIGSGLGKTGGRGHKGQKSRSGGGVRRGFEGG) form a disordered region. Residues 21 to 31 (RGIGSGLGKTG) show a composition bias toward gly residues.

This sequence belongs to the universal ribosomal protein uL15 family. As to quaternary structure, part of the 50S ribosomal subunit.

In terms of biological role, binds to the 23S rRNA. The chain is Large ribosomal subunit protein uL15 from Sodalis glossinidius (strain morsitans).